Here is a 245-residue protein sequence, read N- to C-terminus: UPF0280 protein UNCMA_16740 (245 aa).

Belongs to the UPF0280 family.

The polypeptide is UPF0280 protein UNCMA_16740 (Methanocella arvoryzae (strain DSM 22066 / NBRC 105507 / MRE50)).